The sequence spans 185 residues: MASTALSSAFSLLSLPSSSSPAAAAAAAPRSFAVPSRARPRRAVAVVASTATESPKVLELGDAIAGLTLEEARGLVDHLQERLGVSAAAFAPAAVVAAPGAGGAGAAADEAPAEKTEFDVVIEEVPSSARIASIKVVRALTNLALKEAKDLIEGLPKKVKEGVSKDEAEDAKKQLEEVGAKVSIA.

A chloroplast-targeting transit peptide spans 1-47 (MASTALSSAFSLLSLPSSSSPAAAAAAAPRSFAVPSRARPRRAVAVV).

The protein belongs to the bacterial ribosomal protein bL12 family.

The protein localises to the plastid. The protein resides in the chloroplast. The chain is Large ribosomal subunit protein bL12c (RPL12-2) from Oryza sativa subsp. japonica (Rice).